Here is a 488-residue protein sequence, read N- to C-terminus: Probable glycine dehydrogenase (decarboxylating) subunit 2 (488 aa).

K274 is subject to N6-(pyridoxal phosphate)lysine.

This sequence belongs to the GcvP family. C-terminal subunit subfamily. As to quaternary structure, the glycine cleavage system is composed of four proteins: P, T, L and H. In this organism, the P 'protein' is a heterodimer of two subunits. It depends on pyridoxal 5'-phosphate as a cofactor.

The catalysed reaction is N(6)-[(R)-lipoyl]-L-lysyl-[glycine-cleavage complex H protein] + glycine + H(+) = N(6)-[(R)-S(8)-aminomethyldihydrolipoyl]-L-lysyl-[glycine-cleavage complex H protein] + CO2. Its function is as follows. The glycine cleavage system catalyzes the degradation of glycine. The P protein binds the alpha-amino group of glycine through its pyridoxal phosphate cofactor; CO(2) is released and the remaining methylamine moiety is then transferred to the lipoamide cofactor of the H protein. This chain is Probable glycine dehydrogenase (decarboxylating) subunit 2, found in Listeria monocytogenes serovar 1/2a (strain ATCC BAA-679 / EGD-e).